We begin with the raw amino-acid sequence, 493 residues long: Ribosomal protein uS12 methylthiotransferase RimO (493 aa).

An MTTase N-terminal domain is found at 5–121 (RTVALVTLGC…ISDRLQTILN (117 aa)). Cys14, Cys50, Cys84, Cys198, Cys202, and Cys205 together coordinate [4Fe-4S] cluster. The Radical SAM core domain maps to 184–415 (LGTSPVASVK…QLAEELTSQR (232 aa)). A TRAM domain is found at 417–487 (EERVGETLQV…GVDLVAEHHE (71 aa)).

The protein belongs to the methylthiotransferase family. RimO subfamily. The cofactor is [4Fe-4S] cluster.

The protein resides in the cytoplasm. It carries out the reaction L-aspartate(89)-[ribosomal protein uS12]-hydrogen + (sulfur carrier)-SH + AH2 + 2 S-adenosyl-L-methionine = 3-methylsulfanyl-L-aspartate(89)-[ribosomal protein uS12]-hydrogen + (sulfur carrier)-H + 5'-deoxyadenosine + L-methionine + A + S-adenosyl-L-homocysteine + 2 H(+). Catalyzes the methylthiolation of an aspartic acid residue of ribosomal protein uS12. The polypeptide is Ribosomal protein uS12 methylthiotransferase RimO (Streptomyces griseus subsp. griseus (strain JCM 4626 / CBS 651.72 / NBRC 13350 / KCC S-0626 / ISP 5235)).